The primary structure comprises 311 residues: DNA repair and recombination protein RadA (311 aa).

104–111 is a binding site for ATP; the sequence is GEFGSGKS.

The protein belongs to the eukaryotic RecA-like protein family.

In terms of biological role, involved in DNA repair and in homologous recombination. Binds and assemble on single-stranded DNA to form a nucleoprotein filament. Hydrolyzes ATP in a ssDNA-dependent manner and promotes DNA strand exchange between homologous DNA molecules. The polypeptide is DNA repair and recombination protein RadA (Methanobrevibacter smithii (strain ATCC 35061 / DSM 861 / OCM 144 / PS)).